The primary structure comprises 344 residues: Probable dual-specificity RNA methyltransferase RlmN (344 aa).

Catalysis depends on Glu89, which acts as the Proton acceptor. A Radical SAM core domain is found at 95 to 329 (TDQRLTVCVS…VSLRASRGLD (235 aa)). Cysteines 102 and 334 form a disulfide. [4Fe-4S] cluster-binding residues include Cys109, Cys113, and Cys116. S-adenosyl-L-methionine-binding positions include 156–157 (GE), Ser186, 215–217 (SLH), and Asn291. Cys334 (S-methylcysteine intermediate) is an active-site residue.

It belongs to the radical SAM superfamily. RlmN family. The cofactor is [4Fe-4S] cluster.

The protein localises to the cytoplasm. It carries out the reaction adenosine(2503) in 23S rRNA + 2 reduced [2Fe-2S]-[ferredoxin] + 2 S-adenosyl-L-methionine = 2-methyladenosine(2503) in 23S rRNA + 5'-deoxyadenosine + L-methionine + 2 oxidized [2Fe-2S]-[ferredoxin] + S-adenosyl-L-homocysteine. The enzyme catalyses adenosine(37) in tRNA + 2 reduced [2Fe-2S]-[ferredoxin] + 2 S-adenosyl-L-methionine = 2-methyladenosine(37) in tRNA + 5'-deoxyadenosine + L-methionine + 2 oxidized [2Fe-2S]-[ferredoxin] + S-adenosyl-L-homocysteine. In terms of biological role, specifically methylates position 2 of adenine 2503 in 23S rRNA and position 2 of adenine 37 in tRNAs. This Parasynechococcus marenigrum (strain WH8102) protein is Probable dual-specificity RNA methyltransferase RlmN.